The sequence spans 296 residues: 33 kDa chaperonin (296 aa).

Intrachain disulfides connect Cys238-Cys240 and Cys271-Cys274.

This sequence belongs to the HSP33 family. In terms of processing, under oxidizing conditions two disulfide bonds are formed involving the reactive cysteines. Under reducing conditions zinc is bound to the reactive cysteines and the protein is inactive.

The protein resides in the cytoplasm. Its function is as follows. Redox regulated molecular chaperone. Protects both thermally unfolding and oxidatively damaged proteins from irreversible aggregation. Plays an important role in the bacterial defense system toward oxidative stress. This Clostridium botulinum (strain Loch Maree / Type A3) protein is 33 kDa chaperonin.